A 268-amino-acid chain; its full sequence is Ribosomal RNA small subunit methyltransferase A (268 aa).

S-adenosyl-L-methionine is bound by residues Asn-18, Leu-20, Gly-45, Glu-66, Asp-91, and Asn-112.

This sequence belongs to the class I-like SAM-binding methyltransferase superfamily. rRNA adenine N(6)-methyltransferase family. RsmA subfamily.

Its subcellular location is the cytoplasm. It carries out the reaction adenosine(1518)/adenosine(1519) in 16S rRNA + 4 S-adenosyl-L-methionine = N(6)-dimethyladenosine(1518)/N(6)-dimethyladenosine(1519) in 16S rRNA + 4 S-adenosyl-L-homocysteine + 4 H(+). Its function is as follows. Specifically dimethylates two adjacent adenosines (A1518 and A1519) in the loop of a conserved hairpin near the 3'-end of 16S rRNA in the 30S particle. May play a critical role in biogenesis of 30S subunits. This chain is Ribosomal RNA small subunit methyltransferase A, found in Shewanella sp. (strain MR-7).